The primary structure comprises 885 residues: High affinity cAMP-specific and IBMX-insensitive 3',5'-cyclic phosphodiesterase 8B (885 aa).

2 disordered regions span residues 18–41 (RDSD…APLP) and 72–95 (TELG…GRRR). Residues 23-34 (SSSPRQTTSVSQ) are compositionally biased toward polar residues. The segment covering 75 to 90 (GSGSSAGSAAPAATTS) has biased composition (low complexity). The 72-residue stretch at 267 to 338 (ACNSVFTALD…DTINTCIKKG (72 aa)) folds into the PAS domain. A disordered region spans residues 393–436 (IHRDSGDNSQTEPHSFRYKNRRKESIDVKSISSRGSDAPSLQNR). A compositionally biased stretch (polar residues) spans 422–436 (SISSRGSDAPSLQNR). The residue at position 517 (S517) is a Phosphoserine. In terms of domain architecture, PDEase spans 539–875 (TINDVPPCIS…KHWKTLDDLK (337 aa)). The Proton donor role is filled by H615. Positions 619, 655, and 656 each coordinate a divalent metal cation. Position 754 is a phosphoserine (S754). D781 is a binding site for a divalent metal cation.

Belongs to the cyclic nucleotide phosphodiesterase family. PDE8 subfamily. A divalent metal cation is required as a cofactor. Abundantly expressed in the thyroid. Also very weakly expressed in brain, spinal cord and placenta. In the thyroid isoform 1 predominates, and isoforms 2 and 6 are also highly expressed. In the placenta isoforms 1 and 2 are expressed equally. In the brain isoform 2 predominates.

The catalysed reaction is 3',5'-cyclic AMP + H2O = AMP + H(+). The protein operates within purine metabolism; 3',5'-cyclic AMP degradation; AMP from 3',5'-cyclic AMP: step 1/1. With respect to regulation, inhibited by dipyridimole. Insensitive to selective PDE inhibitors including rolipram and milrinone as well as to the non-selective inhibitor, IBMX. Unaffected by cGMP. Hydrolyzes the second messenger cAMP, which is a key regulator of many important physiological processes. May be involved in specific signaling in the thyroid gland. This Homo sapiens (Human) protein is High affinity cAMP-specific and IBMX-insensitive 3',5'-cyclic phosphodiesterase 8B (PDE8B).